The sequence spans 249 residues: Proteasome activator complex subunit 1 (249 aa).

Residues Pro60–Gly102 form a disordered region. The segment covering Pro68–Gly98 has biased composition (basic and acidic residues).

It belongs to the PA28 family. Heterodimer of PSME1 and PSME2, which forms a hexameric ring. PSME1 can form homoheptamers.

In terms of biological role, implicated in immunoproteasome assembly and required for efficient antigen processing. The PA28 activator complex enhances the generation of class I binding peptides by altering the cleavage pattern of the proteasome. This Sus scrofa (Pig) protein is Proteasome activator complex subunit 1 (PSME1).